Reading from the N-terminus, the 365-residue chain is Aspartate-semialdehyde dehydrogenase (365 aa).

8 residues coordinate NADP(+): T12, G13, S14, V15, S37, S40, L85, and D86. The active-site Acyl-thioester intermediate is C156. G188 provides a ligand contact to NADP(+). Residue H256 is the Proton acceptor of the active site. N343 is an NADP(+) binding site.

The protein belongs to the aspartate-semialdehyde dehydrogenase family. In terms of assembly, homotetramer; dimer of dimers.

It localises to the cytoplasm. The protein resides in the cytosol. The protein localises to the nucleus. The enzyme catalyses L-aspartate 4-semialdehyde + phosphate + NADP(+) = 4-phospho-L-aspartate + NADPH + H(+). The protein operates within amino-acid biosynthesis; L-methionine biosynthesis via de novo pathway; L-homoserine from L-aspartate: step 2/3. Its pathway is amino-acid biosynthesis; L-threonine biosynthesis; L-threonine from L-aspartate: step 2/5. Inhibited by the non-competitive inhibitors phthalaldehyde and naphthalene, the competitive inhibitor 1,4-benzoquinone and derivates such as 2-chloro-3-methoxy-1,4-naphthoquinone, 2,3-dichloro-1,4-naphthoquinone, 2-chloro-1,4-naphthoquinone, 2-bromo-1,4-naphthoquinone and 2,3-dichloro-5,8-dihydroxy-1,4-naphthoquinone, and 5-aminoisoquinoline. Inhibited by vinyl sulfones. In terms of biological role, catalyzes the NADPH-dependent formation of L-aspartate 4-semialdehyde (L-ASA) by the reductive dephosphorylation of 4-phospho-L-aspartate. Mediates the second step in the biosynthesis of amino acids that derive from aspartate (the aspartate family of amino acids), including methioinine and threonine, the latter of which is a precursor to isoleucine. The sequence is that of Aspartate-semialdehyde dehydrogenase from Candida albicans (strain SC5314 / ATCC MYA-2876) (Yeast).